The chain runs to 169 residues: MNPLKKKAPAKVSASKQKRKNREELNAEGRARKREKKHRGNPPGNRNQEQSGDKHPSGKQQRDPRLGSKVPVPLIVGEQPTKPVVANKVETKPRLSPQEELAMLENDDRLDALLERLENGESLSKEEHAYVDTTLDRIDALMEELGIKLDEEEREEEKQDDIMQLLKGN.

Disordered regions lie at residues 1–83 (MNPL…PTKP) and 150–169 (DEEEREEEKQDDIMQLLKGN). Over residues 21 to 30 (NREELNAEGR) the composition is skewed to basic and acidic residues. Positions 31–40 (ARKREKKHRG) are enriched in basic residues. Basic and acidic residues-rich tracts occupy residues 51–66 (SGDKHPSGKQQRDPRL) and 150–161 (DEEEREEEKQDD).

It belongs to the YihI family. Interacts with Der.

A GTPase-activating protein (GAP) that modifies Der/EngA GTPase function. May play a role in ribosome biogenesis. The sequence is that of Der GTPase-activating protein YihI from Photorhabdus laumondii subsp. laumondii (strain DSM 15139 / CIP 105565 / TT01) (Photorhabdus luminescens subsp. laumondii).